A 1083-amino-acid chain; its full sequence is MSSFVLDKEAFVRRVKRLYTEWRAPSIGHDDALRNLDCIMSIVGVEEDVMYSKSMALQLWLLGYELTDTISVFCSDAVYFLTSKKKIEFLKQTQNITEEGFPEINLLVRDRTDKDQGNFEKLIKALQNSKKGKRLGVFAKDAYPGEFSEAWKKSLTASKFEHVDISTIIAYLMCPKDESEINNIRKASLVSMDIFNKYLKDEIMDIIDSDRKVKHNKLSDGCEAAIGEKKYTSGLDPRLLDMAYPPIIQSGGAYSLKFSAVADKNPLHFGVIVCSLGARYKSYCSNISRTFLVNPTEAMQENYTFLVSVQEEILKLLVPGTKLCDVYEKTLDFVKKEKPSMVDNLPKSFGFAMGLEFRENSIVIGPKCQALLKKNMVFNLHVGISNLTNPEATDKEGKNYALFIGDTVLVGEQSPASVMTPSKKKIKNVGIFIKDDSDEEDVDDKKTAKEDQGTEILGRSKRNAVLESKLRNEINTEEKRKEHQRELAQQLNERAKDRLARQGNSKEVEKVRKNTVSYKSISQMPREPEVKELKLYVDKKYETVIMPVFGIQVPFHISTIKNISQSVEGEYTYLRINFFHPGATMGRNEGGLYPQPEATFVKEVTYRSSNVKEHGEVGAPSANLNNAFRLIKEVQKRFKTREAEEREKEDLVKQDTLILSQNKGNPKLKDLYIRPNIVTKRMTGSLEAHSNGFRYISVRGDKVDILYNNIKSAFFQPCDGEMIILLHFHLKYAIMFGKKKHVDVQFYTEVGEITTDLGKHQHMHDRDDLAAEQAERELRHKLKTAFKSFCEKVETMTKSVVEFDTPFRELGFPGAPFRSTVTLQPTSGSLVNLTEWPPFVITLDDVELVHFERVQFHLRNFDMIFVFKEYNKKVAMVNAIPMNMLDHVKEWLNSCDIRYSEGVQSLNWQKIMKTITDDPEGFFEQGGWTFLDPESGSEGENETAESEEDEAYNPTDAESDEESDEDSEYSEASEDSEESDEDLGSDEESGKDWSDLEREAAEEDRNHDYAADDKPRNGKFDSKKHGKSSKHSPSKSSKDKYNSRDKHHSSSSSGNKSSSKDKDRKRSRDDSRDNGHKSKKSRH.

The residue at position 437 (S437) is a Phosphoserine. Positions 466-504 form a coiled coil; it reads LESKLRNEINTEEKRKEHQRELAQQLNERAKDRLARQGN. The interval 923 to 1083 is disordered; it reads FEQGGWTFLD…NGHKSKKSRH (161 aa). Acidic residues predominate over residues 935–987; the sequence is SGSEGENETAESEEDEAYNPTDAESDEESDEDSEYSEASEDSEESDEDLGSDE. Positions 988-1023 are enriched in basic and acidic residues; sequence ESGKDWSDLEREAAEEDRNHDYAADDKPRNGKFDSK. Residues 1024-1033 show a composition bias toward basic residues; the sequence is KHGKSSKHSP. Over residues 1058 to 1076 the composition is skewed to basic and acidic residues; sequence SSKDKDRKRSRDDSRDNGH.

The protein belongs to the peptidase M24 family. SPT16 subfamily. In terms of assembly, component of the FACT complex, a stable heterodimer of dre4/spt16 and Ssrp. Interacts with TRL/GAGA.

It is found in the nucleus. It localises to the chromosome. Functionally, component of the FACT complex, a general chromatin factor that acts to reorganize nucleosomes. The FACT complex is involved in multiple processes that require DNA as a template such as mRNA elongation, DNA replication and DNA repair. During transcription elongation the FACT complex acts as a histone chaperone that both destabilizes and restores nucleosomal structure. It facilitates the passage of RNA polymerase II and transcription by promoting the dissociation of one histone H2A-H2B dimer from the nucleosome, then subsequently promotes the reestablishment of the nucleosome following the passage of RNA polymerase II. The FACT complex is required for expression of Hox genes. This Drosophila melanogaster (Fruit fly) protein is FACT complex subunit spt16 (dre4).